A 389-amino-acid chain; its full sequence is Na(+)/H(+) antiporter NhaA (389 aa).

The next 11 helical transmembrane spans lie at 14–34 (AGGILLLVAVALAMLMANSPL), 59–79 (LILWINDGLMAVFFLLIGLEV), 95–115 (SLPTFAAIGGMLVPAGVYLLF), 124–144 (AGWAIPAATDIAFALGIMALL), 154–174 (VFLLALAIIDDLGVIVIIALF), 177–197 (TDLSTISLVIASLAIAGLVGL), 213–233 (LILWVAVLKSGVHATLAGVII), 257–277 (PWSTFFILPVFAFANAGVYVG), 292–312 (IALGLMLGKPIGVMVFSYIAV), 328–348 (IAPVAAMCGIGFTMSMFIASL), and 363–383 (LGTLIGSIMAALVGYFWLSKV).

The protein belongs to the NhaA Na(+)/H(+) (TC 2.A.33) antiporter family.

It localises to the cell inner membrane. The enzyme catalyses Na(+)(in) + 2 H(+)(out) = Na(+)(out) + 2 H(+)(in). In terms of biological role, na(+)/H(+) antiporter that extrudes sodium in exchange for external protons. This Shewanella baltica (strain OS195) protein is Na(+)/H(+) antiporter NhaA.